The following is a 574-amino-acid chain: Glycine--tRNA ligase (574 aa).

Arg96 and Glu162 together coordinate substrate. Residues 194 to 196 (RNE), 204 to 209 (IRLREF), 327 to 328 (EC), and 450 to 453 (GIDR) each bind ATP. 209–213 (FTQAE) is a substrate binding site. 446–450 (EPSYG) is a substrate binding site.

It belongs to the class-II aminoacyl-tRNA synthetase family.

It is found in the cytoplasm. The catalysed reaction is tRNA(Gly) + glycine + ATP = glycyl-tRNA(Gly) + AMP + diphosphate. Catalyzes the attachment of glycine to tRNA(Gly). In Methanococcus vannielii (strain ATCC 35089 / DSM 1224 / JCM 13029 / OCM 148 / SB), this protein is Glycine--tRNA ligase.